Here is a 341-residue protein sequence, read N- to C-terminus: Glucokinase (341 aa).

18–23 serves as a coordination point for ATP; sequence GDIGGT.

The protein belongs to the bacterial glucokinase family.

The protein resides in the cytoplasm. The catalysed reaction is D-glucose + ATP = D-glucose 6-phosphate + ADP + H(+). This is Glucokinase from Rhizobium etli (strain ATCC 51251 / DSM 11541 / JCM 21823 / NBRC 15573 / CFN 42).